The sequence spans 286 residues: ATP synthase gamma chain (286 aa).

This sequence belongs to the ATPase gamma chain family. In terms of assembly, F-type ATPases have 2 components, CF(1) - the catalytic core - and CF(0) - the membrane proton channel. CF(1) has five subunits: alpha(3), beta(3), gamma(1), delta(1), epsilon(1). CF(0) has three main subunits: a, b and c.

Its subcellular location is the cell inner membrane. Functionally, produces ATP from ADP in the presence of a proton gradient across the membrane. The gamma chain is believed to be important in regulating ATPase activity and the flow of protons through the CF(0) complex. The sequence is that of ATP synthase gamma chain from Pseudomonas syringae pv. tomato (strain ATCC BAA-871 / DC3000).